Consider the following 379-residue polypeptide: UPF0754 protein BpOF4_11355 (379 aa).

Helical transmembrane passes span 6–26 and 359–379; these read FIGF…SLAI and LGAL…LFIG.

This sequence belongs to the UPF0754 family.

The protein resides in the cell membrane. The sequence is that of UPF0754 protein BpOF4_11355 from Alkalihalophilus pseudofirmus (strain ATCC BAA-2126 / JCM 17055 / OF4) (Bacillus pseudofirmus).